Here is a 349-residue protein sequence, read N- to C-terminus: Spermidine/putrescine import ATP-binding protein PotA (349 aa).

One can recognise an ABC transporter domain in the interval 7–237; the sequence is IELKGITKSY…PANSFVAKFI (231 aa). 39–46 provides a ligand contact to ATP; that stretch reads GPSGCGKT.

This sequence belongs to the ABC transporter superfamily. Spermidine/putrescine importer (TC 3.A.1.11.1) family. In terms of assembly, the complex is composed of two ATP-binding proteins (PotA), two transmembrane proteins (PotB and PotC) and a solute-binding protein (PotD).

The protein resides in the cell membrane. It catalyses the reaction ATP + H2O + polyamine-[polyamine-binding protein]Side 1 = ADP + phosphate + polyamineSide 2 + [polyamine-binding protein]Side 1.. Part of the ABC transporter complex PotABCD involved in spermidine/putrescine import. Responsible for energy coupling to the transport system. In Clostridium perfringens (strain SM101 / Type A), this protein is Spermidine/putrescine import ATP-binding protein PotA.